Reading from the N-terminus, the 3118-residue chain is MPAATAGILLLLLLGTLEGSQTQRRQSQAHQQRGLFPAVLNLASNALITTNATCGEKGPEMYCKLVEHVPGQPVRNPQCRICNQNSSNPYQRHPITNAIDGKNTWWQSPSIKNGVEYHYVTITLDLQQVFQIAYVIVKAANSPRPGNWILERSLDDVEYKPWQYHAVTDTECLTLYNIYPRTGPPSYAKDDEVICTSFYSKIHPLENGEIHISLINGRPSADDPSPELLEFTSARYIRLRFQRIRTLNADLMMFAHKDPREIDPIVTRRYYYSVKDISVGGMCICYGHARACPLDPATNKSRCECEHNTCGESCDRCCPGFHQKPWRAGTFLTKSECEACNCHGKAEECYYDETVASRNLSLNIHGKYIGGGVCINCTHNTAGINCETCVDGFFRPKGVSPNYPRPCQPCHCDPTGSLSEVCVKDEKYAQRGLKPGSCHCKTGFGGVNCDRCVRGYHGYPDCQPCNCSGLGSTNEDPCVGPCSCKENVEGEDCSRCKSGFFNLQEDNQKGCEECFCSGVSNRCQSSYWTYGNIQDMRGWYLTDLSGRIRMAPQLDNPDSPQQISISNSEARKSLLDGYYWSAPPPYLGNRLPAVGGQLSFTISYDLEEEEDDTEKILQLMIIFEGNDLRISTAYKEVYLEPSEEHIEEVSLKEEAFTIHGTNLPVTRKDFMIVLTNLERVLMQITYNLGMDAIFRLSSVNLESAVPYPTDRRIATDVEVCQCPPGYSGSSCETCWPRHRRVNGTIFGGICEPCQCFAHAEACDDITGECLNCKDHTGGPYCNECLPGFYGDPTRGSPEDCQPCACPLNIPSNNFSPTCHLDRSLGLICDECPIGYTGPRCERCAEGYFGQPSIPGGSCQPCQCNDNLDYSIPGSCDSLSGSCLICKPGTTGRYCELCADGYFGDAVNAKNCQPCRCNINGSFSEICHTRTGQCECRPNVQGRHCDECKPETFGLQLGRGCLPCNCNSFGSKSFDCEASGQCWCQPGVAGKKCDRCAHGYFNFQEGGCIACDCSHLGNNCDPKTGQCICPPNTTGEKCSECLPNTWGHSIVTGCKVCNCSTVGSLASQCNVNTGQCSCHPKFSGMKCSECSRGHWNYPLCTLCDCFLPGTDATTCDLETRKCSCSDQTGQCSCKVNVEGVHCDRCRPGKFGLDAKNPLGCSSCYCFGVTSQCSEAKGLIRTWVTLSDEQTILPLVDEALQHTTTKGIAFQKPEIVAKMDEVRQELHLEPFYWKLPQQFEGKKLMAYGGKLKYAIYFEARDETGFATYKPQVIIRGGTPTHARIITRHMAAPLIGQLTRHEIEMTEKEWKYYGDDPRISRTVTREDFLDILYDIHYILIKATYGNVVRQSRISEISMEVAEPGHVLAGSPPAHLIERCDCPPGYSGLSCETCAPGFYRLRSEPGGRTPGPTLGTCVPCQCNGHSSQCDPETSVCQNCQHHTAGDFCERCALGYYGIVRGLPNDCQPCACPLISPSNNFSPSCVLEGLEDYRCTACPRGYEGQYCERCAPGYTGSPSSPGGSCQECECDPYGSLPVPCDRVTGLCTCRPGATGRKCDGCEHWHAREGAECVFCGDECTGLLLGDLARLEQMTMNINLTGPLPAPYKILYGLENTTQELKHLLSPQRAPERLIQLAEGNVNTLVMETNELLTRATKVTADGEQTGQDAERTNSRAESLEEFIKGLVQDAEAINEKAVQLNETLGNQDKTAERNLEELQKEIDRMLKELRSKDLQTQKEVAEDELVAAEGLLKRVNKLFGEPRAQNEDMEKDLQQKLAEYKNKLDDAWDLLREATDKTRDANRLSAANQKNMTILETKKEAIEGSKRQIENTLKEGNDILDEANRLLGEINSVIDYVDDIKTKLPPMSEELSDKIDDLAQEIKDRRLAEKVFQAESHAAQLNDSSAVLDGILDEAKNISFNATAAFRAYSNIKDYIDEAEKVAREAKELAQGATKLATSPQGLLKEDAKGSLQKSFRILNEAKKLANDVKGNHNDLNDLKTRLETADLRNSGLLGALNDTMDKLSAITNDTAAKLQAVKEKAREANDTAKAVLAQVKDLHQNLDGLKQNYNKLADSVAKTNAVVKDPSKNKIIADAGTSVRNLEQEADRLIDKLKPIKELEDNLKKNISEIKELINQARKQANSIKVSVSSGGDCVRTYRPEIKKGSYNNIVVHVKTAVADNLLFYLGSAKFIDFLAIEMRKGKVSFLWDVGSGVGRVEYPDLTIDDSYWYRIEASRTGRNGSISVRALDGPKASMVPSTYHSVSPPGYTILDVDANAMLFVGGLTGKIKKADAVRVITFTGCMGETYFDNKPIGLWNFREKEGDCKGCTVSPQVEDSEGTIQFDGEGYALVSRPIRWYPNISTVMFKFRTFSSSALLMYLATRDLKDFMSVELSDGHVKVSYDLGSGMTSVVSNQNHNDGKWKAFTLSRIQKQANISIVDIDSNQEENVATSSSGNNFGLDLKADDKIYFGGLPTLRNLSMKARPEVNVKKYSGCLKDIEISRTPYNILSSPDYVGVTKGCSLENVYTVSFPKPGFVELAAVSIDVGTEINLSFSTRNESGIILLGSGGTLTPPRRKRRQTTQAYYAIFLNKGRLEVHLSSGTRTMRKIVIKPEPNLFHDGREHSVHVERTRGIFTVQIDEDRRHMQNLTEEQPIEVKKLFVGGAPPEFQPSPLRNIPAFQGCVWNLVINSIPMDFAQPIAFKNADIGRCTYQKPREDESEAVPAEVIVQPQPVPTPAFPFPAPTMVHGPCVAESEPALLTGSKQFGLSRNSHIAIAFDDTKVKNRLTIELEVRTEAESGLLFYMARINHADFATVQLRNGFPYFSYDLGSGDTSTMIPTKINDGQWHKIKIVRVKQEGILYVDDASSQTISPKKADILDVVGILYVGGLPINYTTRRIGPVTYSLDGCVRNLHMEQAPVDLDQPTSSFHVGTCFANAESGTYFDGTGFAKAVGGFKVGLDLLVEFEFRTTRPTGVLLGVSSQKMDGMGIEMIDEKLMFHVDNGAGRFTAIYDAGIPGHMCNGQWHKVTAKKIKNRLELVVDGNQVDAQSPNSASTSADTNDPVFVGGFPGGLNQFGLTTNIRFRGCIRSLKLTKGTGKPLEVNFAKALELRGVQPVSCPTT.

The signal sequence occupies residues M1–G19. The Laminin N-terminal domain occupies Q31 to M282. N-linked (GlcNAc...) asparagine glycans are attached at residues N51 and N85. 6 disulfide bridges follow: C283-C292, C285-C303, C305-C314, C317-C337, C340-C349, and C342-C374. Laminin EGF-like domains follow at residues C283 to A339, C340 to P409, C410 to P464, and C465 to E513. N299 carries an N-linked (GlcNAc...) asparagine glycan. N359 and N376 each carry an N-linked (GlcNAc...) asparagine glycan. Disulfide bonds link C377/C386, C389/C407, C410/C422, C412/C438, C440/C449, C452/C462, C465/C478, C467/C482, C484/C493, and C496/C511. N466 is a glycosylation site (N-linked (GlcNAc...) asparagine). The region spanning C514–C523 is the Laminin EGF-like 5; first part domain. The region spanning Y527–V719 is the Laminin IV type A 1 domain. A Laminin EGF-like 5; second part domain is found at C720 to P752. N742 carries an N-linked (GlcNAc...) asparagine glycan. Disulfide bonds link C753-C762, C755-C769, C772-C781, C784-C800, C803-C818, C805-C828, C831-C840, C843-C858, C861-C875, C863-C882, C885-C894, C897-C911, C914-C926, C916-C933, C935-C944, C947-C960, C963-C975, C965-C981, C983-C992, C995-C1007, C1010-C1019, C1012-C1026, C1028-C1037, C1040-C1053, C1056-C1068, C1058-C1075, C1077-C1086, C1089-C1099, C1102-C1114, C1104-C1130, C1132-C1141, and C1144-C1159. Laminin EGF-like domains follow at residues C753–P802, C803–P860, C861–P913, C914–P962, C963–A1009, C1010–V1055, C1056–L1101, and C1102–S1161. Residue N919 is glycosylated (N-linked (GlcNAc...) asparagine). The N-linked (GlcNAc...) asparagine glycan is linked to N1031. N-linked (GlcNAc...) asparagine glycosylation occurs at N1057. The Laminin EGF-like 14; first part domain occupies C1162–C1171. One can recognise a Laminin IV type A 2 domain in the interval S1172–R1375. Positions C1376 to P1415 constitute a Laminin EGF-like 14; second part domain. Cystine bridges form between C1378–C1387, C1416–C1425, C1418–C1432, C1435–C1444, C1447–C1462, C1465–C1480, C1467–C1490, C1493–C1502, C1505–C1520, C1523–C1535, C1525–C1542, C1544–C1553, and C1556–C1567. 3 consecutive Laminin EGF-like domains span residues C1416–P1464, C1465–E1522, and C1523–F1569. The interval C1570–I2140 is domain II and I. N-linked (GlcNAc...) asparagine glycans are attached at residues N1593, N1610, N1696, N1806, N1897, N1912, N1916, N2013, N2024, N2041, N2122, and N2236. Residues Q1662 to S1863 adopt a coiled-coil conformation. Residues A1923 to S2146 are a coiled coil. Laminin G-like domains are found at residues K2141–C2324, T2336–C2517, V2522–C2706, S2759–C2930, and T2929–C3115. Residues C2298 and C2324 are joined by a disulfide bond. N2356, N2431, and N2474 each carry an N-linked (GlcNAc...) asparagine glycan. Residues C2491 and C2517 are joined by a disulfide bond. Residues N2547, N2554, and N2644 are each glycosylated (N-linked (GlcNAc...) asparagine). A disulfide bond links C2679 and C2706. N2889 is a glycosylation site (N-linked (GlcNAc...) asparagine). 2 disulfides stabilise this stretch: C2905-C2930 and C3083-C3115.

As to quaternary structure, laminin is a complex glycoprotein, consisting of three different polypeptide chains (alpha, beta, gamma), which are bound to each other by disulfide bonds into a cross-shaped molecule comprising one long and three short arms with globules at each end. Alpha-2 is a subunit of laminin-2 (laminin-211 or merosin), laminin-4 (laminin-221 or S-merosin) and laminin-12 (laminin-213). Interacts with FBLN1, FBLN2 and NID2.

The protein localises to the secreted. It is found in the extracellular space. Its subcellular location is the extracellular matrix. It localises to the basement membrane. Functionally, binding to cells via a high affinity receptor, laminin is thought to mediate the attachment, migration and organization of cells into tissues during embryonic development by interacting with other extracellular matrix components. The protein is Laminin subunit alpha-2 (Lama2) of Mus musculus (Mouse).